We begin with the raw amino-acid sequence, 476 residues long: NAD(+) hydrolase ThsA (476 aa).

In terms of domain architecture, Deacetylase sirtuin-type spans 4 to 283 (NPIVELFIKD…QRIENNIKTK (280 aa)). The NAD(+) site is built by Ala23, Asp114, and His152. His152 serves as the catalytic Proton acceptor. An SLOG (STALD) domain, binds 3'cADPR region spans residues 284 to 476 (TVFLSGSAVE…IIEFVEILSN (193 aa)). 3'cADPR is bound by residues Gly289, Ser290, Leu326, Phe357, Arg371, Lys388, Gly399, and Glu403.

This sequence belongs to the soluble Thoeris ThsA family. As to quaternary structure, homotetramer formed by dimer of dimers; homooctamers are occasionally seen. Not seen to interact with ThsB. In the absence of the signal generated by ThsB, 63% monomer and 20% homotetramer; in the presence of the ThsB signal product 40% of the protein is dimeric. Homotetramer in solution; probably dimerizes via the N-terminal sirtuin-like domain.

It localises to the cytoplasm. The enzyme catalyses NAD(+) + H2O = ADP-D-ribose + nicotinamide + H(+). Its activity is regulated as follows. Activated by a molecule generated by endogenous ThsB (AC J8G8J6) or ThsB' (AC J8CSK2); activation in vitro is 50-100x more sensitive to 3' cyclic ADP-D-ribose (3'cADPR) than 2'cADPR. 3'cADPR activates the NADase function of ThsA by binding to the SLOG domain, which changes its tetramer organization, allowing NAD to access the active site. Also activated by a signal molecule generated by B.dafuensis TIR1 (AC A0A5B8Z670) and TIR2 (AC A0A5B8Z260), and by BdTIR (AC I1GTC2), a plant protein involved in defense against bacterial infection. The signal produced by BdTIR is probably 2'cADPR, which activates this protein, the signal produced by endogenous ThsB' is probably 3'cADPR. NAD(+) hydrolyzing component (NADase) of the Thoeris antiviral defense system, composed of ThsA and ThsB. Activated by a signal molecule generated by endogenous ThsB (AC J8G8J6) or ThsB' (AC J8CSK2, probably 3'cADPR), by TIR1 and TIR2 from B.dafuensis or by BdTIR from B.distachyon (AC I1GTC2, probably 2'cADPR). Upon activation binds and hydrolyzes NAD(+), leading to cell death and inhibition of phage replication. Not seen to bind DNA. Activation is 50-100x more sensitive to 3' cyclic ADP-D-ribose (3'cADPR) than 2'cADPR. In another paper ThsA is not activated by any tested cADPR isomer, although it binds 3'cADPR; it was suggested the protein is already in a fully active state. Expression of ThsA and ThsB in B.subtilis (strain BEST7003) confers resistance to phages phi29, SBSphiC, SBSphiJ and SPO1. At multiplicity of infection (MOI) of 0.05 Thoeris-encoding cultures grow normally when infected with SPO1, at MOI 5 cultures collapse prematurely by 90 minutes post-infection, thus the phage are not able to complete a replication cycle. NAD(+) levels fall and ADP-D-ribose levels rise 60 minutes post-infection. Thoeris cultures eventually recover, but retain the same susceptibility to SPO1. This Bacillus cereus (strain MSX-D12) protein is NAD(+) hydrolase ThsA.